The following is a 305-amino-acid chain: MAGRNQNRTVSLPGIQASGHVLAFGNCTDNDMLEEDAEVYELRSRGKEKVRRSASRDRLDDIVILTKDIQEGDTLNAVALQYCCTVADIKRVNNLISDQDFFALRSIKIPVKRFSSLTETLHPLKGRHILHPPPVPYFQEQDIVPADGSLSSSESAGSFLKEVDRDIEQIVKCTDTKKENLNEVVSALTAQQVRFEPDNKSIHRKDPYYGADWGIGWWTAVVIMLIVGIITPVFYLLYYEILAKVDVSHHSTVGSSHLHPGLTPPTQHREMENEIGPTKGIPVGQQDDHKLYRQDPQAHDAQHKT.

At 1 to 216 (MAGRNQNRTV…PYYGADWGIG (216 aa)) the chain is on the extracellular side. N-linked (GlcNAc...) asparagine glycans are attached at residues Asn7 and Asn26. Ser55 bears the Phosphoserine mark. Residues 65–109 (LTKDIQEGDTLNAVALQYCCTVADIKRVNNLISDQDFFALRSIKI) form the LysM domain. N-linked (GlcNAc...) asparagine glycosylation occurs at Asn199. A helical transmembrane segment spans residues 217-237 (WWTAVVIMLIVGIITPVFYLL). Topologically, residues 238 to 305 (YYEILAKVDV…PQAHDAQHKT (68 aa)) are cytoplasmic. The interval 253–305 (VGSSHLHPGLTPPTQHREMENEIGPTKGIPVGQQDDHKLYRQDPQAHDAQHKT) is disordered. Basic and acidic residues predominate over residues 286–305 (QDDHKLYRQDPQAHDAQHKT).

It localises to the cell membrane. The protein localises to the golgi apparatus. Its function is as follows. Essential for Golgi structural integrity. The sequence is that of LysM and putative peptidoglycan-binding domain-containing protein 3 (Lysmd3) from Mus musculus (Mouse).